The sequence spans 106 residues: Small ribosomal subunit protein uS10 (106 aa).

This sequence belongs to the universal ribosomal protein uS10 family. Part of the 30S ribosomal subunit.

Functionally, involved in the binding of tRNA to the ribosomes. This Prochlorococcus marinus (strain MIT 9515) protein is Small ribosomal subunit protein uS10.